A 466-amino-acid polypeptide reads, in one-letter code: Siroheme synthase (466 aa).

The interval Met1–Leu203 is precorrin-2 dehydrogenase /sirohydrochlorin ferrochelatase. Residues Ser22–Ile23 and Lys43–Ser44 each bind NAD(+). The residue at position 128 (Ser128) is a Phosphoserine. The interval Gly216 to Lys466 is uroporphyrinogen-III C-methyltransferase. Pro225 contributes to the S-adenosyl-L-methionine binding site. Residue Asp248 is the Proton acceptor of the active site. The active-site Proton donor is the Lys270. Residues Gly301–Asp303, Ile306, Thr331–Ala332, Met383, and Gly412 each bind S-adenosyl-L-methionine.

It in the N-terminal section; belongs to the precorrin-2 dehydrogenase / sirohydrochlorin ferrochelatase family. The protein in the C-terminal section; belongs to the precorrin methyltransferase family.

It catalyses the reaction uroporphyrinogen III + 2 S-adenosyl-L-methionine = precorrin-2 + 2 S-adenosyl-L-homocysteine + H(+). It carries out the reaction precorrin-2 + NAD(+) = sirohydrochlorin + NADH + 2 H(+). The enzyme catalyses siroheme + 2 H(+) = sirohydrochlorin + Fe(2+). It participates in cofactor biosynthesis; adenosylcobalamin biosynthesis; precorrin-2 from uroporphyrinogen III: step 1/1. Its pathway is cofactor biosynthesis; adenosylcobalamin biosynthesis; sirohydrochlorin from precorrin-2: step 1/1. It functions in the pathway porphyrin-containing compound metabolism; siroheme biosynthesis; precorrin-2 from uroporphyrinogen III: step 1/1. The protein operates within porphyrin-containing compound metabolism; siroheme biosynthesis; siroheme from sirohydrochlorin: step 1/1. It participates in porphyrin-containing compound metabolism; siroheme biosynthesis; sirohydrochlorin from precorrin-2: step 1/1. Multifunctional enzyme that catalyzes the SAM-dependent methylations of uroporphyrinogen III at position C-2 and C-7 to form precorrin-2 via precorrin-1. Then it catalyzes the NAD-dependent ring dehydrogenation of precorrin-2 to yield sirohydrochlorin. Finally, it catalyzes the ferrochelation of sirohydrochlorin to yield siroheme. This is Siroheme synthase from Vesicomyosocius okutanii subsp. Calyptogena okutanii (strain HA).